We begin with the raw amino-acid sequence, 190 residues long: Cancer-related nucleoside-triphosphatase homolog (190 aa).

Alanine 2 bears the N-acetylalanine mark. ATP is bound by residues 9 to 16 (GPPGVGKT) and 109 to 116 (ICVIDEVG). An N6-acetyllysine modification is found at lysine 165.

The protein belongs to the THEP1 NTPase family. Monomer.

It catalyses the reaction a ribonucleoside 5'-triphosphate + H2O = a ribonucleoside 5'-diphosphate + phosphate + H(+). The enzyme catalyses 5-methyl-UTP + H2O = 5-methyl-UDP + phosphate + H(+). It carries out the reaction CTP + H2O = CDP + phosphate + H(+). The catalysed reaction is ATP + H2O = ADP + phosphate + H(+). It catalyses the reaction GTP + H2O = GDP + phosphate + H(+). Has nucleotide phosphatase activity towards ATP, GTP, CTP, TTP and UTP. Hydrolyzes nucleoside diphosphates with lower efficiency. This Bos taurus (Bovine) protein is Cancer-related nucleoside-triphosphatase homolog (NTPCR).